The primary structure comprises 507 residues: Glutamate--tRNA ligase (507 aa).

The 'HIGH' region signature appears at 14–24 (PSPTGYLHIGG). A 'KMSKS' region motif is present at residues 261-265 (KLSKR). Residue Lys-264 participates in ATP binding.

It belongs to the class-I aminoacyl-tRNA synthetase family. Glutamate--tRNA ligase type 1 subfamily. In terms of assembly, monomer.

It localises to the cytoplasm. The enzyme catalyses tRNA(Glu) + L-glutamate + ATP = L-glutamyl-tRNA(Glu) + AMP + diphosphate. Its function is as follows. Catalyzes the attachment of glutamate to tRNA(Glu) in a two-step reaction: glutamate is first activated by ATP to form Glu-AMP and then transferred to the acceptor end of tRNA(Glu). This Roseiflexus castenholzii (strain DSM 13941 / HLO8) protein is Glutamate--tRNA ligase.